The primary structure comprises 662 residues: UPF0313 protein CPR_1216 (662 aa).

Residues 296 to 567 (AIEEVKFSLV…AMQRALLQFK (272 aa)) form the Radical SAM core domain. [4Fe-4S] cluster-binding residues include Cys310, Cys314, and Cys317. The disordered stretch occupies residues 597–662 (RDKNSFGKGN…QRVSKGKKRR (66 aa)). The span at 618–632 (SRNENSGRRESEDKK) shows a compositional bias: basic and acidic residues. The span at 633–644 (RSSHSKKQRGNK) shows a compositional bias: basic residues.

The protein belongs to the UPF0313 family. The cofactor is [4Fe-4S] cluster.

This Clostridium perfringens (strain SM101 / Type A) protein is UPF0313 protein CPR_1216.